Here is a 491-residue protein sequence, read N- to C-terminus: Acetyl-coenzyme A carboxylase carboxyl transferase subunit beta (491 aa).

A CoA carboxyltransferase N-terminal domain is found at 132-491 (LWNQCENCFI…ISELLNLHAL (360 aa)). Residues cysteine 136, cysteine 139, cysteine 155, and cysteine 158 each contribute to the Zn(2+) site. The C4-type zinc-finger motif lies at 136–158 (CENCFIPNYKKVLKSNMQICEEC). Residues 252–262 (EKVEEWTKPDL) are compositionally biased toward basic and acidic residues. Disordered regions lie at residues 252–273 (EKVEEWTKPDLDEGEESQDEER) and 279–298 (DKGEESQEIEDSEANDEDDD). A compositionally biased stretch (acidic residues) spans 284–298 (SQEIEDSEANDEDDD).

This sequence belongs to the AccD/PCCB family. As to quaternary structure, acetyl-CoA carboxylase is a heterohexamer composed of biotin carboxyl carrier protein, biotin carboxylase and 2 subunits each of ACCase subunit alpha and ACCase plastid-coded subunit beta (accD). It depends on Zn(2+) as a cofactor.

Its subcellular location is the plastid. The enzyme catalyses N(6)-carboxybiotinyl-L-lysyl-[protein] + acetyl-CoA = N(6)-biotinyl-L-lysyl-[protein] + malonyl-CoA. Its pathway is lipid metabolism; malonyl-CoA biosynthesis; malonyl-CoA from acetyl-CoA: step 1/1. Its function is as follows. Component of the acetyl coenzyme A carboxylase (ACC) complex. Biotin carboxylase (BC) catalyzes the carboxylation of biotin on its carrier protein (BCCP) and then the CO(2) group is transferred by the transcarboxylase to acetyl-CoA to form malonyl-CoA. The sequence is that of Acetyl-coenzyme A carboxylase carboxyl transferase subunit beta from Cuscuta gronovii (Common dodder).